A 360-amino-acid chain; its full sequence is Carbamoyl phosphate synthase small chain (360 aa).

The segment at 1 to 169 (MTKRLLILED…TKTAYPAPGI (169 aa)) is CPSase. Residues Ser46, Gly220, and Gly222 each contribute to the L-glutamine site. Residues 172 to 358 (NIVLVDFGLK…LEMIDSWRCT (187 aa)) enclose the Glutamine amidotransferase type-1 domain. Residue Cys247 is the Nucleophile of the active site. Residues Met248, Gln251, Asn289, Gly291, and Tyr292 each contribute to the L-glutamine site. Catalysis depends on residues His331 and Asp333.

This sequence belongs to the CarA family. Composed of two chains; the small (or glutamine) chain promotes the hydrolysis of glutamine to ammonia, which is used by the large (or ammonia) chain to synthesize carbamoyl phosphate. Tetramer of heterodimers (alpha,beta)4.

It carries out the reaction hydrogencarbonate + L-glutamine + 2 ATP + H2O = carbamoyl phosphate + L-glutamate + 2 ADP + phosphate + 2 H(+). It catalyses the reaction L-glutamine + H2O = L-glutamate + NH4(+). The protein operates within amino-acid biosynthesis; L-arginine biosynthesis; carbamoyl phosphate from bicarbonate: step 1/1. It functions in the pathway pyrimidine metabolism; UMP biosynthesis via de novo pathway; (S)-dihydroorotate from bicarbonate: step 1/3. Small subunit of the glutamine-dependent carbamoyl phosphate synthetase (CPSase). CPSase catalyzes the formation of carbamoyl phosphate from the ammonia moiety of glutamine, carbonate, and phosphate donated by ATP, constituting the first step of 2 biosynthetic pathways, one leading to arginine and/or urea and the other to pyrimidine nucleotides. The small subunit (glutamine amidotransferase) binds and cleaves glutamine to supply the large subunit with the substrate ammonia. The polypeptide is Carbamoyl phosphate synthase small chain (Streptococcus pyogenes serotype M18 (strain MGAS8232)).